The chain runs to 69 residues: Protein transport protein Sec61 subunit gamma (69 aa).

Residues 1–32 (MDAVDSVVDPLREFAKDSVRLVKRCHKPDRKE) are Cytoplasmic-facing. Residues 33 to 61 (FTKVAARTAIGFVVMGFVGFFVKLIFIPI) form a helical membrane-spanning segment. The Extracellular segment spans residues 62–69 (NNIIVGSG).

This sequence belongs to the SecE/SEC61-gamma family. Heterotrimeric complex composed of SEC61-alpha, SEC61-beta and SEC61-gamma.

The protein localises to the endoplasmic reticulum membrane. Necessary for protein translocation in the endoplasmic reticulum. This chain is Protein transport protein Sec61 subunit gamma, found in Oryza sativa subsp. japonica (Rice).